Reading from the N-terminus, the 64-residue chain is Large ribosomal subunit protein bL35 (64 aa).

Disordered regions lie at residues 1-20 (MPKAKTHSGASKRFRRTGTG) and 37-64 (PTKRTRRLAGRTQVSANDAPRINKMLNG).

This sequence belongs to the bacterial ribosomal protein bL35 family.

The protein is Large ribosomal subunit protein bL35 of Mycobacterium sp. (strain JLS).